The following is a 266-amino-acid chain: Glutamate racemase (266 aa).

Substrate contacts are provided by residues 9-10 and 41-42; these read DS and YG. The active-site Proton donor/acceptor is the Cys-72. 73-74 is a binding site for substrate; it reads NT. Cys-184 (proton donor/acceptor) is an active-site residue. 185–186 is a binding site for substrate; that stretch reads TH.

Belongs to the aspartate/glutamate racemases family.

It carries out the reaction L-glutamate = D-glutamate. It participates in cell wall biogenesis; peptidoglycan biosynthesis. Provides the (R)-glutamate required for cell wall biosynthesis. The protein is Glutamate racemase of Staphylococcus aureus (strain Mu3 / ATCC 700698).